A 908-amino-acid polypeptide reads, in one-letter code: NADH-quinone oxidoreductase subunit G (908 aa).

The 2Fe-2S ferredoxin-type domain maps to 2 to 83; sequence ATIHVDGKEY…GTFISIDDEE (82 aa). Residues Cys34, Cys45, Cys48, and Cys67 each coordinate [2Fe-2S] cluster. Residues 83-122 form the 4Fe-4S His(Cys)3-ligated-type domain; the sequence is EAKQFRESVVEWLMTNHPHDCPVCEEGGNCHLQDMTVMTG. His99, Cys103, Cys106, Cys112, Cys151, Cys154, Cys157, Cys201, Cys228, Cys231, Cys235, and Cys263 together coordinate [4Fe-4S] cluster. A 4Fe-4S Mo/W bis-MGD-type domain is found at 221–277; that stretch reads MQFAPSICQQCSIGCNISPGERYGELRRIENRYNGTVNHYFLCDRGRFGYGYVNLKD.

This sequence belongs to the complex I 75 kDa subunit family. Composed of 13 different subunits. Subunits NuoCD, E, F, and G constitute the peripheral sector of the complex. The cofactor is [2Fe-2S] cluster. [4Fe-4S] cluster serves as cofactor.

It carries out the reaction a quinone + NADH + 5 H(+)(in) = a quinol + NAD(+) + 4 H(+)(out). In terms of biological role, NDH-1 shuttles electrons from NADH, via FMN and iron-sulfur (Fe-S) centers, to quinones in the respiratory chain. The immediate electron acceptor for the enzyme in this species is believed to be ubiquinone. Couples the redox reaction to proton translocation (for every two electrons transferred, four hydrogen ions are translocated across the cytoplasmic membrane), and thus conserves the redox energy in a proton gradient. In Escherichia coli O157:H7, this protein is NADH-quinone oxidoreductase subunit G (nuoG).